We begin with the raw amino-acid sequence, 334 residues long: D-fructose 1,6-bisphosphatase class 2/sedoheptulose 1,7-bisphosphatase (334 aa).

Positions 33, 57, 85, and 88 each coordinate Mn(2+). Substrate-binding positions include 88 to 90 (EGT), Y119, 164 to 166 (RAR), and 186 to 188 (DGD). Residue E213 participates in Mn(2+) binding.

The protein belongs to the FBPase class 2 family. As to quaternary structure, homotetramer. Mn(2+) is required as a cofactor.

The enzyme catalyses beta-D-fructose 1,6-bisphosphate + H2O = beta-D-fructose 6-phosphate + phosphate. The catalysed reaction is D-sedoheptulose 1,7-bisphosphate + H2O = D-sedoheptulose 7-phosphate + phosphate. It functions in the pathway carbohydrate biosynthesis; Calvin cycle. Its function is as follows. Catalyzes the hydrolysis of fructose 1,6-bisphosphate (Fru 1,6-P2) and sedoheptulose 1,7-bisphosphate (Sed 1,7-P2) to fructose 6-phosphate and sedoheptulose 7-phosphate, respectively. This is D-fructose 1,6-bisphosphatase class 2/sedoheptulose 1,7-bisphosphatase from Prochlorococcus marinus (strain MIT 9303).